An 85-amino-acid chain; its full sequence is Large ribosomal subunit protein bL27 (85 aa).

Residues 1–20 (MAHKKGASSSRNGRDSNAQR) are disordered. A compositionally biased stretch (polar residues) spans 7 to 19 (ASSSRNGRDSNAQ).

The protein belongs to the bacterial ribosomal protein bL27 family.

The polypeptide is Large ribosomal subunit protein bL27 (Kineococcus radiotolerans (strain ATCC BAA-149 / DSM 14245 / SRS30216)).